The sequence spans 187 residues: Lipoprotein signal peptidase (187 aa).

3 consecutive transmembrane segments (helical) span residues 12-32, 68-88, and 91-111; these read VAVF…TKMW, MTWL…VLAV, and ISMK…GNLI. Active-site residues include D127 and D140. Residues 141–161 form a helical membrane-spanning segment; it reads IFLMLAGVAAVLLLFLGEPFS. A disordered region spans residues 167–187; that stretch reads EANGKTLGDDANATDDGAKAA.

This sequence belongs to the peptidase A8 family.

Its subcellular location is the cell membrane. It catalyses the reaction Release of signal peptides from bacterial membrane prolipoproteins. Hydrolyzes -Xaa-Yaa-Zaa-|-(S,diacylglyceryl)Cys-, in which Xaa is hydrophobic (preferably Leu), and Yaa (Ala or Ser) and Zaa (Gly or Ala) have small, neutral side chains.. It participates in protein modification; lipoprotein biosynthesis (signal peptide cleavage). Its function is as follows. This protein specifically catalyzes the removal of signal peptides from prolipoproteins. The chain is Lipoprotein signal peptidase from Bifidobacterium adolescentis (strain ATCC 15703 / DSM 20083 / NCTC 11814 / E194a).